We begin with the raw amino-acid sequence, 306 residues long: Peroxisome biogenesis factor 2 (306 aa).

Residues Met1 to Leu15 are Peroxisomal matrix-facing. Residues Arg16–Gln42 traverse the membrane as a helical segment. Topologically, residues Gly43–Leu48 are cytoplasmic. The helical transmembrane segment at Leu49–Ala74 threads the bilayer. The Peroxisomal matrix segment spans residues Thr75 to Leu98. The chain crosses the membrane as a helical span at residues Asn99–Ser125. The Cytoplasmic portion of the chain corresponds to Asn126–Gln134. Residues Arg135–Gln161 form a helical membrane-spanning segment. The Peroxisomal matrix segment spans residues Gly162–Gly188. A helical transmembrane segment spans residues Phe189–Ile212. The Cytoplasmic portion of the chain corresponds to Asn213 to Leu306. Zn(2+) contacts are provided by Cys245, Cys248, Cys260, His262, Cys265, Cys268, Cys281, and Cys284. The RING-type zinc-finger motif lies at Cys245–Ser285.

Belongs to the pex2/pex10/pex12 family. Component of the PEX2-PEX10-PEX12 retrotranslocation channel.

The protein resides in the peroxisome membrane. It catalyses the reaction [E2 ubiquitin-conjugating enzyme]-S-ubiquitinyl-L-cysteine + [acceptor protein]-L-cysteine = [E2 ubiquitin-conjugating enzyme]-L-cysteine + [acceptor protein]-S-ubiquitinyl-L-cysteine.. The catalysed reaction is S-ubiquitinyl-[E2 ubiquitin-conjugating enzyme]-L-cysteine + [acceptor protein]-L-lysine = [E2 ubiquitin-conjugating enzyme]-L-cysteine + N(6)-ubiquitinyl-[acceptor protein]-L-lysine.. Its pathway is protein modification; protein ubiquitination. E3 ubiquitin-protein ligase component of a retrotranslocation channel required for peroxisome organization by mediating export of the PEX5 receptor from peroxisomes to the cytosol, thereby promoting PEX5 recycling. The retrotranslocation channel is composed of PEX2, PEX10 and PEX12; each subunit contributing transmembrane segments that coassemble into an open channel that specifically allows the passage of PEX5 through the peroxisomal membrane. PEX2 also regulates peroxisome organization by acting as a E3 ubiquitin-protein ligase. The protein is Peroxisome biogenesis factor 2 of Xenopus laevis (African clawed frog).